The following is a 279-amino-acid chain: NAD-dependent protein deacylase (279 aa).

One can recognise a Deacetylase sirtuin-type domain in the interval 20 to 272 (RERLRQRIFF…PEFVEKLLKG (253 aa)). 48-67 (GAGISAESGIRTFRAADGLW) provides a ligand contact to NAD(+). Positions 92 and 95 each coordinate substrate. 129–132 (QNID) provides a ligand contact to NAD(+). The active-site Proton acceptor is His-147. Zn(2+) is bound by residues Cys-155 and Cys-174. NAD(+) contacts are provided by residues 214–216 (GTS), 240–242 (NLE), and Ala-258.

It belongs to the sirtuin family. Class III subfamily. Forms a 1:1 complex with acetyl-CoA synthetase (Acs). Zn(2+) serves as cofactor.

The protein resides in the cytoplasm. The catalysed reaction is N(6)-acetyl-L-lysyl-[protein] + NAD(+) + H2O = 2''-O-acetyl-ADP-D-ribose + nicotinamide + L-lysyl-[protein]. It carries out the reaction N(6)-succinyl-L-lysyl-[protein] + NAD(+) + H2O = 2''-O-succinyl-ADP-D-ribose + nicotinamide + L-lysyl-[protein]. The enzyme catalyses N(6)-(2-hydroxyisobutanoyl)-L-lysyl-[protein] + NAD(+) + H2O = 2''-O-(2-hydroxyisobutanoyl)-ADP-D-ribose + nicotinamide + L-lysyl-[protein]. With respect to regulation, deacetylation is inhibited by nicotinamide. NAD-dependent lysine deacetylase that specifically removes acetyl groups on target proteins. Also acts as a protein-lysine deacylase by mediating protein desuccinylation and de-2-hydroxyisobutyrylation. Modulates the activities of several proteins which are inactive in their acylated form. Activates the enzyme acetyl-CoA synthetase (acs) by deacetylating 'Lys-609' in the inactive, acetylated form of the enzyme. May also modulate the activity of other propionyl-adenosine monophosphate (AMP)-forming enzymes. The chain is NAD-dependent protein deacylase from Escherichia coli (strain K12).